A 241-amino-acid polypeptide reads, in one-letter code: NH(3)-dependent NAD(+) synthetase (241 aa).

29–36 is a binding site for ATP; it reads GISGGIDS. Asp-35 serves as a coordination point for Mg(2+). Arg-110 serves as a coordination point for deamido-NAD(+). Glu-135 lines the Mg(2+) pocket. Deamido-NAD(+) is bound by residues Lys-143 and Asp-150. Residues Lys-159 and Ser-181 each contribute to the ATP site. 226-227 serves as a coordination point for deamido-NAD(+); it reads HK.

This sequence belongs to the NAD synthetase family. In terms of assembly, homodimer.

The enzyme catalyses deamido-NAD(+) + NH4(+) + ATP = AMP + diphosphate + NAD(+) + H(+). Its pathway is cofactor biosynthesis; NAD(+) biosynthesis; NAD(+) from deamido-NAD(+) (ammonia route): step 1/1. Functionally, catalyzes the ATP-dependent amidation of deamido-NAD to form NAD. Uses ammonia as a nitrogen source. This Finegoldia magna (strain ATCC 29328 / DSM 20472 / WAL 2508) (Peptostreptococcus magnus) protein is NH(3)-dependent NAD(+) synthetase.